A 149-amino-acid polypeptide reads, in one-letter code: Large ribosomal subunit protein bL9 (149 aa).

The protein belongs to the bacterial ribosomal protein bL9 family.

Binds to the 23S rRNA. The protein is Large ribosomal subunit protein bL9 of Xanthomonas axonopodis pv. citri (strain 306).